Here is a 433-residue protein sequence, read N- to C-terminus: Gamma-glutamyl phosphate reductase 1 (433 aa).

It belongs to the gamma-glutamyl phosphate reductase family.

The protein resides in the cytoplasm. It catalyses the reaction L-glutamate 5-semialdehyde + phosphate + NADP(+) = L-glutamyl 5-phosphate + NADPH + H(+). It participates in amino-acid biosynthesis; L-proline biosynthesis; L-glutamate 5-semialdehyde from L-glutamate: step 2/2. Catalyzes the NADPH-dependent reduction of L-glutamate 5-phosphate into L-glutamate 5-semialdehyde and phosphate. The product spontaneously undergoes cyclization to form 1-pyrroline-5-carboxylate. The sequence is that of Gamma-glutamyl phosphate reductase 1 from Synechocystis sp. (strain ATCC 27184 / PCC 6803 / Kazusa).